Consider the following 242-residue polypeptide: Pyr4-family terpene cyclase mfmH (242 aa).

The next 4 membrane-spanning stretches (helical) occupy residues 25–45 (VQDGLIICSGLCWTTAYILYI), 55–75 (GMPLVCLCANIAWEFLFGAAI), 80–100 (AQVVSFFPWFVIDIGIVYTTW), and 116–136 (NLGWILLGGIAGMLVMFWAFL). N170 is a glycosylation site (N-linked (GlcNAc...) asparagine). 2 helical membrane passes run 175–195 (SWGIWFTRWIGSVFAELIFVW) and 211–231 (VTIFLFIVTEVADLTYPFVYA).

The protein belongs to the paxB family.

It localises to the membrane. It participates in secondary metabolite biosynthesis; terpenoid biosynthesis. Terpene cyclase; part of the gene cluster that mediates the biosynthesis of the phthalide-terpenoid hybrid 11'-O-desmethylfendlerol. Within the pathway, mfmH catalyzes the last step and cyclizes the prenyl unit of 5-O-farnesylcyclopolic acid into a drimane-like structure to yield 11'-O-desmethylfendlerol. The biosynthesis of 11'-O-desmethylfendlerol begins with the NR-PKS mfmB that forms 3,5-dimethylorsellinic acid (DMOA), which is then transformed into the phthalide 5,7-dihydroxy-4-(hydroxymethyl)-6-methylphthalide by the cytochrome P450 monooxygenase mfmA and the hydrolase mfmC. Subsequently, the methyltransferase mfmE catalyzes 7-O-methylation to yield 5-hydroxy-4-(hydroxymethyl)-7-methoxy-6-methylphthalide, which undergoes C-3 hydroxylation by the cytochrome P450 monooxygenase mfmF. The resultant cyclopolic acid (2,5-dihydroxy-4-(hydroxymethyl)-7-methoxy-6-methylphthalide) is then farnesylated by the DMATS-type prenyltransferase mfmD to afford 5-O-farnesylcyclopolic acid. Finally, the Pyr4-family terpene cyclase mfmH cyclizes the farnesyl moiety of 5-O-farnesylcyclopolic acid into a drimane-like structure, thus completing the biosynthesis of 11'-O-desmethylfendlerol. The polypeptide is Pyr4-family terpene cyclase mfmH (Annulohypoxylon moriforme (Filamentous fungus)).